The chain runs to 231 residues: Cytochrome c oxidase subunit 2 (231 aa).

The Mitochondrial intermembrane portion of the chain corresponds to 1 to 30; the sequence is MNNFFQGYNLLFQHSLFASYMDWFHAFNCS. Residues 31-51 form a helical membrane-spanning segment; the sequence is LLLGVLVFVTLLFGYLIFSTF. At 52 to 64 the chain is on the mitochondrial matrix side; that stretch reads YFKSKKIEYQFGE. The chain crosses the membrane as a helical span at residues 65-85; it reads LLCSIFPTIILLMQMVPSLSL. At 86 to 231 the chain is on the mitochondrial intermembrane side; the sequence is LYYYGLMNLD…FKSWCFGTME (146 aa). 6 residues coordinate Cu cation: H164, C199, E201, C203, H207, and M210. Residue E201 participates in Mg(2+) binding.

The protein belongs to the cytochrome c oxidase subunit 2 family. Component of the cytochrome c oxidase (complex IV, CIV), a multisubunit enzyme composed of a catalytic core of 3 subunits and several supernumerary subunits. The complex exists as a monomer or a dimer and forms supercomplexes (SCs) in the inner mitochondrial membrane with ubiquinol-cytochrome c oxidoreductase (cytochrome b-c1 complex, complex III, CIII). It depends on Cu cation as a cofactor.

It localises to the mitochondrion inner membrane. It carries out the reaction 4 Fe(II)-[cytochrome c] + O2 + 8 H(+)(in) = 4 Fe(III)-[cytochrome c] + 2 H2O + 4 H(+)(out). In terms of biological role, component of the cytochrome c oxidase, the last enzyme in the mitochondrial electron transport chain which drives oxidative phosphorylation. The respiratory chain contains 3 multisubunit complexes succinate dehydrogenase (complex II, CII), ubiquinol-cytochrome c oxidoreductase (cytochrome b-c1 complex, complex III, CIII) and cytochrome c oxidase (complex IV, CIV), that cooperate to transfer electrons derived from NADH and succinate to molecular oxygen, creating an electrochemical gradient over the inner membrane that drives transmembrane transport and the ATP synthase. Cytochrome c oxidase is the component of the respiratory chain that catalyzes the reduction of oxygen to water. Electrons originating from reduced cytochrome c in the intermembrane space (IMS) are transferred via the dinuclear copper A center (CU(A)) of subunit 2 and heme A of subunit 1 to the active site in subunit 1, a binuclear center (BNC) formed by heme A3 and copper B (CU(B)). The BNC reduces molecular oxygen to 2 water molecules using 4 electrons from cytochrome c in the IMS and 4 protons from the mitochondrial matrix. The protein is Cytochrome c oxidase subunit 2 (cox-2) of Caenorhabditis briggsae.